The following is a 311-amino-acid chain: Ribose-phosphate pyrophosphokinase (311 aa).

ATP contacts are provided by residues 34-36 (DQE) and 93-94 (RQ). 2 residues coordinate Mg(2+): histidine 127 and aspartate 168. Lysine 191 is a catalytic residue. D-ribose 5-phosphate contacts are provided by residues arginine 193, aspartate 217, and 221–225 (DSGGT).

This sequence belongs to the ribose-phosphate pyrophosphokinase family. Class I subfamily. In terms of assembly, homohexamer. It depends on Mg(2+) as a cofactor.

It localises to the cytoplasm. The enzyme catalyses D-ribose 5-phosphate + ATP = 5-phospho-alpha-D-ribose 1-diphosphate + AMP + H(+). It participates in metabolic intermediate biosynthesis; 5-phospho-alpha-D-ribose 1-diphosphate biosynthesis; 5-phospho-alpha-D-ribose 1-diphosphate from D-ribose 5-phosphate (route I): step 1/1. In terms of biological role, involved in the biosynthesis of the central metabolite phospho-alpha-D-ribosyl-1-pyrophosphate (PRPP) via the transfer of pyrophosphoryl group from ATP to 1-hydroxyl of ribose-5-phosphate (Rib-5-P). In Mesorhizobium japonicum (strain LMG 29417 / CECT 9101 / MAFF 303099) (Mesorhizobium loti (strain MAFF 303099)), this protein is Ribose-phosphate pyrophosphokinase.